Here is a 380-residue protein sequence, read N- to C-terminus: ATP phosphoribosyltransferase regulatory subunit (380 aa).

It belongs to the class-II aminoacyl-tRNA synthetase family. HisZ subfamily. As to quaternary structure, heteromultimer composed of HisG and HisZ subunits.

The protein localises to the cytoplasm. Its pathway is amino-acid biosynthesis; L-histidine biosynthesis; L-histidine from 5-phospho-alpha-D-ribose 1-diphosphate: step 1/9. Its function is as follows. Required for the first step of histidine biosynthesis. May allow the feedback regulation of ATP phosphoribosyltransferase activity by histidine. The chain is ATP phosphoribosyltransferase regulatory subunit from Thermoanaerobacter pseudethanolicus (strain ATCC 33223 / 39E) (Clostridium thermohydrosulfuricum).